Here is a 1384-residue protein sequence, read N- to C-terminus: Enhancer of mRNA-decapping protein 4 (1384 aa).

WD repeat units lie at residues G171–Q211, N227–S274, G292–P331, and H340–T390. 3 disordered regions span residues T471–S494, A551–P584, and A796–E931. Positions S482 to S494 are enriched in polar residues. The segment covering C834–I844 has biased composition (basic and acidic residues). Polar residues-rich tracts occupy residues H854–E866 and S918–E931. A coiled-coil region spans residues T930 to Q1012.

It belongs to the WD repeat EDC4 family.

Its subcellular location is the cytoplasm. The protein resides in the P-body. It localises to the nucleus. In the process of mRNA degradation, seems to play a role in mRNA decapping. The polypeptide is Enhancer of mRNA-decapping protein 4 (edc4) (Danio rerio (Zebrafish)).